The primary structure comprises 94 residues: Small ribosomal subunit protein uS19c (94 aa).

It belongs to the universal ribosomal protein uS19 family.

The protein resides in the plastid. It localises to the chloroplast. Its function is as follows. Protein S19 forms a complex with S13 that binds strongly to the 16S ribosomal RNA. The sequence is that of Small ribosomal subunit protein uS19c from Pleurastrum terricola (Filamentous green alga).